Here is a 311-residue protein sequence, read N- to C-terminus: tRNA-cytidine(32) 2-sulfurtransferase (311 aa).

Positions 47–52 match the PP-loop motif motif; the sequence is SGGKDS. Positions 122, 125, and 213 each coordinate [4Fe-4S] cluster.

It belongs to the TtcA family. In terms of assembly, homodimer. Mg(2+) is required as a cofactor. It depends on [4Fe-4S] cluster as a cofactor.

It localises to the cytoplasm. It catalyses the reaction cytidine(32) in tRNA + S-sulfanyl-L-cysteinyl-[cysteine desulfurase] + AH2 + ATP = 2-thiocytidine(32) in tRNA + L-cysteinyl-[cysteine desulfurase] + A + AMP + diphosphate + H(+). It functions in the pathway tRNA modification. Catalyzes the ATP-dependent 2-thiolation of cytidine in position 32 of tRNA, to form 2-thiocytidine (s(2)C32). The sulfur atoms are provided by the cysteine/cysteine desulfurase (IscS) system. The protein is tRNA-cytidine(32) 2-sulfurtransferase of Escherichia coli O1:K1 / APEC.